Here is a 230-residue protein sequence, read N- to C-terminus: Type II restriction enzyme MjaV (230 aa).

It catalyses the reaction Endonucleolytic cleavage of DNA to give specific double-stranded fragments with terminal 5'-phosphates.. Functionally, a P subtype restriction enzyme that recognizes the double-stranded sequence 5'-GTAC-3'; the cleavage site is unknown. This Methanocaldococcus jannaschii (strain ATCC 43067 / DSM 2661 / JAL-1 / JCM 10045 / NBRC 100440) (Methanococcus jannaschii) protein is Type II restriction enzyme MjaV (mjaVR).